A 227-amino-acid polypeptide reads, in one-letter code: Cytochrome c oxidase subunit 2 (227 aa).

The Mitochondrial intermembrane portion of the chain corresponds to 1–14 (MAYPFQLGFQDATS). Residues 15–45 (PIMEELLHFHDHTLMIVFLISSLVLYIITLM) form a helical membrane-spanning segment. The Mitochondrial matrix portion of the chain corresponds to 46–59 (LTTKLTHTSTMDAQ). The helical transmembrane segment at 60 to 87 (EVETVWTILPAIILILIALPSLRILYMM) threads the bilayer. Residues 88-227 (DEVNNPSLTV…IFEKWSASML (140 aa)) lie on the Mitochondrial intermembrane side of the membrane. Cu cation-binding residues include histidine 161, cysteine 196, glutamate 198, cysteine 200, histidine 204, and methionine 207. A Mg(2+)-binding site is contributed by glutamate 198.

Belongs to the cytochrome c oxidase subunit 2 family. As to quaternary structure, component of the cytochrome c oxidase (complex IV, CIV), a multisubunit enzyme composed of 14 subunits. The complex is composed of a catalytic core of 3 subunits MT-CO1, MT-CO2 and MT-CO3, encoded in the mitochondrial DNA, and 11 supernumerary subunits COX4I, COX5A, COX5B, COX6A, COX6B, COX6C, COX7A, COX7B, COX7C, COX8 and NDUFA4, which are encoded in the nuclear genome. The complex exists as a monomer or a dimer and forms supercomplexes (SCs) in the inner mitochondrial membrane with NADH-ubiquinone oxidoreductase (complex I, CI) and ubiquinol-cytochrome c oxidoreductase (cytochrome b-c1 complex, complex III, CIII), resulting in different assemblies (supercomplex SCI(1)III(2)IV(1) and megacomplex MCI(2)III(2)IV(2)). Found in a complex with TMEM177, COA6, COX18, COX20, SCO1 and SCO2. Interacts with TMEM177 in a COX20-dependent manner. Interacts with COX20. Interacts with COX16. Cu cation is required as a cofactor.

The protein resides in the mitochondrion inner membrane. The enzyme catalyses 4 Fe(II)-[cytochrome c] + O2 + 8 H(+)(in) = 4 Fe(III)-[cytochrome c] + 2 H2O + 4 H(+)(out). Its function is as follows. Component of the cytochrome c oxidase, the last enzyme in the mitochondrial electron transport chain which drives oxidative phosphorylation. The respiratory chain contains 3 multisubunit complexes succinate dehydrogenase (complex II, CII), ubiquinol-cytochrome c oxidoreductase (cytochrome b-c1 complex, complex III, CIII) and cytochrome c oxidase (complex IV, CIV), that cooperate to transfer electrons derived from NADH and succinate to molecular oxygen, creating an electrochemical gradient over the inner membrane that drives transmembrane transport and the ATP synthase. Cytochrome c oxidase is the component of the respiratory chain that catalyzes the reduction of oxygen to water. Electrons originating from reduced cytochrome c in the intermembrane space (IMS) are transferred via the dinuclear copper A center (CU(A)) of subunit 2 and heme A of subunit 1 to the active site in subunit 1, a binuclear center (BNC) formed by heme A3 and copper B (CU(B)). The BNC reduces molecular oxygen to 2 water molecules using 4 electrons from cytochrome c in the IMS and 4 protons from the mitochondrial matrix. This chain is Cytochrome c oxidase subunit 2 (MT-CO2), found in Balaenoptera borealis (Sei whale).